The sequence spans 155 residues: SsrA-binding protein (155 aa).

The protein belongs to the SmpB family.

It is found in the cytoplasm. Required for rescue of stalled ribosomes mediated by trans-translation. Binds to transfer-messenger RNA (tmRNA), required for stable association of tmRNA with ribosomes. tmRNA and SmpB together mimic tRNA shape, replacing the anticodon stem-loop with SmpB. tmRNA is encoded by the ssrA gene; the 2 termini fold to resemble tRNA(Ala) and it encodes a 'tag peptide', a short internal open reading frame. During trans-translation Ala-aminoacylated tmRNA acts like a tRNA, entering the A-site of stalled ribosomes, displacing the stalled mRNA. The ribosome then switches to translate the ORF on the tmRNA; the nascent peptide is terminated with the 'tag peptide' encoded by the tmRNA and targeted for degradation. The ribosome is freed to recommence translation, which seems to be the essential function of trans-translation. The protein is SsrA-binding protein of Streptococcus pyogenes serotype M4 (strain MGAS10750).